The following is a 313-amino-acid chain: Methionyl-tRNA formyltransferase (313 aa).

113 to 116 (SLLP) contacts (6S)-5,6,7,8-tetrahydrofolate.

This sequence belongs to the Fmt family.

The catalysed reaction is L-methionyl-tRNA(fMet) + (6R)-10-formyltetrahydrofolate = N-formyl-L-methionyl-tRNA(fMet) + (6S)-5,6,7,8-tetrahydrofolate + H(+). In terms of biological role, attaches a formyl group to the free amino group of methionyl-tRNA(fMet). The formyl group appears to play a dual role in the initiator identity of N-formylmethionyl-tRNA by promoting its recognition by IF2 and preventing the misappropriation of this tRNA by the elongation apparatus. This chain is Methionyl-tRNA formyltransferase, found in Acidithiobacillus ferrooxidans (strain ATCC 23270 / DSM 14882 / CIP 104768 / NCIMB 8455) (Ferrobacillus ferrooxidans (strain ATCC 23270)).